A 296-amino-acid chain; its full sequence is Transposase for insertion sequence element IS629 (296 aa).

An Integrase catalytic domain is found at 125-285 (VAERPDQLWV…TPPAEAEKAY (161 aa)).

Functionally, involved in the transposition of the insertion sequence. The sequence is that of Transposase for insertion sequence element IS629 from Shigella sonnei.